A 393-amino-acid polypeptide reads, in one-letter code: NAD(P)H-quinone oxidoreductase subunit H, chloroplastic (393 aa).

It belongs to the complex I 49 kDa subunit family. NDH is composed of at least 16 different subunits, 5 of which are encoded in the nucleus.

The protein localises to the plastid. The protein resides in the chloroplast thylakoid membrane. It carries out the reaction a plastoquinone + NADH + (n+1) H(+)(in) = a plastoquinol + NAD(+) + n H(+)(out). It catalyses the reaction a plastoquinone + NADPH + (n+1) H(+)(in) = a plastoquinol + NADP(+) + n H(+)(out). Its function is as follows. NDH shuttles electrons from NAD(P)H:plastoquinone, via FMN and iron-sulfur (Fe-S) centers, to quinones in the photosynthetic chain and possibly in a chloroplast respiratory chain. The immediate electron acceptor for the enzyme in this species is believed to be plastoquinone. Couples the redox reaction to proton translocation, and thus conserves the redox energy in a proton gradient. This is NAD(P)H-quinone oxidoreductase subunit H, chloroplastic from Platanus occidentalis (Sycamore).